The chain runs to 367 residues: Phosphoribosylaminoimidazole-succinocarboxamide synthase (367 aa).

Belongs to the SAICAR synthetase family.

It carries out the reaction 5-amino-1-(5-phospho-D-ribosyl)imidazole-4-carboxylate + L-aspartate + ATP = (2S)-2-[5-amino-1-(5-phospho-beta-D-ribosyl)imidazole-4-carboxamido]succinate + ADP + phosphate + 2 H(+). The protein operates within purine metabolism; IMP biosynthesis via de novo pathway; 5-amino-1-(5-phospho-D-ribosyl)imidazole-4-carboxamide from 5-amino-1-(5-phospho-D-ribosyl)imidazole-4-carboxylate: step 1/2. This chain is Phosphoribosylaminoimidazole-succinocarboxamide synthase, found in Psychromonas ingrahamii (strain DSM 17664 / CCUG 51855 / 37).